A 283-amino-acid polypeptide reads, in one-letter code: Urease accessory protein UreD (283 aa).

The protein belongs to the UreD family. In terms of assembly, ureD, UreF and UreG form a complex that acts as a GTP-hydrolysis-dependent molecular chaperone, activating the urease apoprotein by helping to assemble the nickel containing metallocenter of UreC. The UreE protein probably delivers the nickel.

The protein localises to the cytoplasm. Its function is as follows. Required for maturation of urease via the functional incorporation of the urease nickel metallocenter. The polypeptide is Urease accessory protein UreD (Acaryochloris marina (strain MBIC 11017)).